The chain runs to 479 residues: Altronate oxidoreductase (479 aa).

18 to 29 (IIQFGEGNFLRA) is an NAD(+) binding site.

The protein belongs to the mannitol dehydrogenase family. UxaB subfamily.

The catalysed reaction is D-altronate + NAD(+) = keto-D-tagaturonate + NADH + H(+). It participates in carbohydrate metabolism; pentose and glucuronate interconversion. This is Altronate oxidoreductase from Phocaeicola vulgatus (strain ATCC 8482 / DSM 1447 / JCM 5826 / CCUG 4940 / NBRC 14291 / NCTC 11154) (Bacteroides vulgatus).